Here is a 351-residue protein sequence, read N- to C-terminus: Nuclear inhibitor of protein phosphatase 1 (351 aa).

Positions 1 to 142 (MAAAANSGSS…LPSAVKGDEK (142 aa)) are interaction with CDC5L, SF3B1 and MELK. One can recognise an FHA domain in the interval 49–101 (YLFGRNPDLCDFTIDHQSCSRVHAALVYHKHLKRVFLIDLNSTHGTFLGHIRL). The segment at 143-224 (MGGEDDELKG…VDPSVGRFRN (82 aa)) is interaction with EED. T161 carries the phosphothreonine modification. Phosphoserine occurs at positions 178 and 199. Short sequence motifs (nuclear localization signal) lie at residues 185–209 (GNLD…DDEI) and 210–240 (INPE…RVEG). An involved in PP-1 inhibition region spans residues 191-200 (RPKRKRKNSR). The segment at 200–203 (RVTF) is involved in PP-1 binding. The residue at position 204 (S204) is a Phosphoserine. The residue at position 249 (S249) is a Phosphoserine. Position 264 is a phosphotyrosine; by LYN; in vitro (Y264). Positions 310 to 329 (AVNMNPAPNPAVYNPEAVNE) are interaction with EED. Positions 316 to 351 (APNPAVYNPEAVNEPKKKKYAKEAWPGKKPTPSLLI) are disordered. Residues 330–351 (PKKKKYAKEAWPGKKPTPSLLI) are RNA-binding. Residues 331–337 (KKKKYAK) form an involved in PP-1 inhibition region. Y335 carries the phosphotyrosine modification.

In terms of assembly, interacts with phosphorylated CDC5L, SF3B1 and MELK. Interacts with EED, in a nucleic acid-stimulated manner. Part of a complex consisting of PPP1R8, EED, HDAC2 and PP-1. Part of the spliceosome. Interacts with PPP1CA, PPP1CB and PPP1CC. Mg(2+) is required as a cofactor. In terms of processing, may be inactivated by phosphorylation on Ser-199 or Ser-204. Phosphorylated by Lyn in vitro on Tyr-264, and also on Tyr-335 in the presence of RNA. Ubiquitously expressed, with highest levels in heart and skeletal muscle, followed by brain, placenta, lung, liver and pancreas. Less abundant in kidney. The concentration and ratio between isoforms is cell-type dependent. Isoform Alpha (&gt;90%) and isoform Beta were found in brain, heart and kidney. Isoform Gamma is mainly found in B-cells and T-lymphocytes, and has been found in 293 embryonic kidney cells.

It is found in the nucleus. The protein localises to the nucleus speckle. It localises to the cytoplasm. Inhibitor subunit of the major nuclear protein phosphatase-1 (PP-1). It has RNA-binding activity but does not cleave RNA and may target PP-1 to RNA-associated substrates. May also be involved in pre-mRNA splicing. Binds DNA and might act as a transcriptional repressor. Seems to be required for cell proliferation. In terms of biological role, isoform Gamma is a site-specific single-strand endoribonuclease that cleaves single strand RNA 3' to purines and pyrimidines in A+U-rich regions. It generates 5'-phosphate termini at the site of cleavage. This isoform does not inhibit PP-1. May be implicated in mRNA splicing. This chain is Nuclear inhibitor of protein phosphatase 1 (PPP1R8), found in Homo sapiens (Human).